Reading from the N-terminus, the 1286-residue chain is X-linked retinitis pigmentosa GTPase regulator-interacting protein 1 (1286 aa).

The tract at residues 144–193 (QVGHRQLHTAGAPVPEKPKRGPRDRLSYTAPPSFKEHATNENRGEVASKP) is disordered. Basic and acidic residues-rich tracts occupy residues 159–169 (EKPKRGPRDRL) and 177–189 (FKEHATNENRGEV). Residues 294 to 584 (KAQLTEVQEA…LEGILRSHDL (291 aa)) are a coiled coil. The C2 domain maps to 781 to 906 (GGRKAQEEEF…AKNESIKGDF (126 aa)). Disordered stretches follow at residues 934–1008 (SFLK…RKHG) and 1058–1108 (EEEE…PMSQ). Basic and acidic residues-rich tracts occupy residues 940–960 (AQTKGKDTKDSSKISSEEEKA), 988–998 (HGGERKEKEHQ), and 1070–1084 (KQKEPLHPVNDKESS). Polar residues predominate over residues 1085–1096 (EQGSEVSEAQTT). Positions 1091–1281 (SEAQTTDSDD…VLHAIYKEMT (191 aa)) are interaction with RPGR.

This sequence belongs to the RPGRIP1 family. As to quaternary structure, forms homodimers and elongated homopolymers. Interacts with RPGR. Interacts with NPHP4. Interacts with NEK4. Interacts with SPATA7. Interacts with CEP290/NPHP6; mediating the association between RPGR and CEP290/NPHP6. In terms of tissue distribution, strong expression in retina, with weaker expression in testis. Expressed in other neurons such as amacrine cells. Colocalizes with RGPR in the outer segment of rod photoreceptors and cone outer segments.

It localises to the cell projection. The protein resides in the cilium. Functionally, may function as scaffolding protein. Required for normal location of RPGR at the connecting cilium of photoreceptor cells. Required for normal disk morphogenesis and disk organization in the outer segment of photoreceptor cells and for survival of photoreceptor cells. In Homo sapiens (Human), this protein is X-linked retinitis pigmentosa GTPase regulator-interacting protein 1 (RPGRIP1).